Consider the following 270-residue polypeptide: Chromo domain-containing protein cec-4 (270 aa).

Disordered stretches follow at residues 1–24 (MAKK…ETSK) and 143–229 (KIAQ…KNDV). Residues 87 to 147 (YAVERVLAHR…HQEDLKIAQT (61 aa)) enclose the Chromo domain. Basic residues-rich tracts occupy residues 151–167 (TPSK…KRRA) and 187–197 (TPKQSTKKLKR). Residues 205–229 (LVEKSKKKAIPDLENHTLDQEKNDV) show a composition bias toward basic and acidic residues.

Interacts with mono-, di- and tri-methylated 'Lys-9' residues on histone H3. Weakly interacts with methylated 'Lys-37' residues on histone H3.

The protein localises to the nucleus inner membrane. Its subcellular location is the membrane. In terms of biological role, chromatin anchor protein which binds to methylated lysine residues on histone H3, thereby recruiting heterochromatin to the nuclear periphery, especially in embryonic cells, with a lesser role in differentiated cells. May be required for the correct positioning of chromatin and nucleoli in embryos. The chain is Chromo domain-containing protein cec-4 from Caenorhabditis elegans.